Reading from the N-terminus, the 170-residue chain is Endoribonuclease YbeY (170 aa).

Zn(2+) is bound by residues His128, His132, and His138.

Belongs to the endoribonuclease YbeY family. The cofactor is Zn(2+).

The protein localises to the cytoplasm. Functionally, single strand-specific metallo-endoribonuclease involved in late-stage 70S ribosome quality control and in maturation of the 3' terminus of the 16S rRNA. In Ruegeria sp. (strain TM1040) (Silicibacter sp.), this protein is Endoribonuclease YbeY.